Here is a 779-residue protein sequence, read N- to C-terminus: Transcriptional regulator QRICH1 (779 aa).

Position 1 is an N-acetylmethionine (methionine 1). A CARD domain is found at glutamate 6 to threonine 48. 2 disordered regions span residues glutamine 141–serine 163 and alanine 219–valine 242. The residue at position 346 (serine 346) is a Phosphoserine. Residues lysine 354 and lysine 359 each participate in a glycyl lysine isopeptide (Lys-Gly) (interchain with G-Cter in SUMO2) cross-link. The span at glutamine 420–glutamate 430 shows a compositional bias: low complexity. The segment at glutamine 420–glutamine 443 is disordered. Serine 467 is subject to Phosphoserine.

Its subcellular location is the nucleus. It localises to the cytoplasm. The protein resides in the cell membrane. Transcriptional regulator that acts as a mediator of the integrated stress response (ISR) through transcriptional control of protein homeostasis under conditions of ER stress. Controls the outcome of the unfolded protein response (UPR), an ER-stress response pathway that either promotes recovery of ER homeostasis and cell survival, or triggers the terminal UPR which elicits programmed cell death when ER stress is prolonged and unresolved. ER stress induces QRICH1 translation by a ribosome translation re-initiation mechanism in response to EIF2S1/eIF-2-alpha phosphorylation, and stress-induced QRICH1 regulates a transcriptional program associated with protein translation, protein secretion-mediated proteotoxicity and cell death during the terminal UPR. May cooperate with ATF4 transcription factor signaling to regulate ER homeostasis which is critical for cell viability. Up-regulates CASP3/caspase-3 activity in epithelial cells under ER stress. Central regulator of proteotoxicity associated with ER stress-mediated inflammatory diseases in the intestines and liver. Involved in chondrocyte hypertrophy, a process required for normal longitudinal bone growth. The sequence is that of Transcriptional regulator QRICH1 (QRICH1) from Bos taurus (Bovine).